Consider the following 427-residue polypeptide: Glucose-6-phosphate isomerase (427 aa).

The active-site Proton donor is the glutamate 281. Residues histidine 302 and lysine 417 contribute to the active site.

Belongs to the GPI family.

The protein resides in the cytoplasm. It catalyses the reaction alpha-D-glucose 6-phosphate = beta-D-fructose 6-phosphate. It functions in the pathway carbohydrate biosynthesis; gluconeogenesis. The protein operates within carbohydrate degradation; glycolysis; D-glyceraldehyde 3-phosphate and glycerone phosphate from D-glucose: step 2/4. In terms of biological role, catalyzes the reversible isomerization of glucose-6-phosphate to fructose-6-phosphate. This chain is Glucose-6-phosphate isomerase, found in Mycoplasmopsis pulmonis (strain UAB CTIP) (Mycoplasma pulmonis).